We begin with the raw amino-acid sequence, 361 residues long: MKFGWVNVIGDNWEEKKKIVTTALESSIPVVVAEPEDIEKIKELGNIKVASHSLDADIVLVNKNDNIEFLKEAKNLGKETAIYIPIESKEDEEFASEVARFGFVDNIILEGRDWTIIPLENLIADLFHRDVKIVASVNSVDEAKVAYEILEKGTDGVLLNPKNLEDIKELSKLIEEMNKEKVALDVATVTKVEPIGSGDRVCIDTCSLMKIGEGMLIGSYSRALFLVHSETVENPYVATRPFRVNAGPVHAYILCPGNKTKYLSELKAGDKVLIVDKDGNTREAIVGRVKIERRPLVLIEAEYKGDIIRTILQNAETIRLVNEKGEPISVVDLKPGDKVLIKPEEYARHFGMAIKETIIEK.

Belongs to the archaeal-type DHQ synthase family.

It carries out the reaction 2-amino-2,3,7-trideoxy-D-lyxo-hept-6-ulosonate + NAD(+) + H2O = 3-dehydroquinate + NH4(+) + NADH + H(+). Functionally, catalyzes the oxidative deamination and cyclization of 2-amino-3,7-dideoxy-D-threo-hept-6-ulosonic acid (ADH) to yield 3-dehydroquinate (DHQ), which is fed into the canonical shikimic pathway of aromatic amino acid biosynthesis. The sequence is that of 3-dehydroquinate synthase (aroB') from Methanocaldococcus jannaschii (strain ATCC 43067 / DSM 2661 / JAL-1 / JCM 10045 / NBRC 100440) (Methanococcus jannaschii).